Consider the following 179-residue polypeptide: Bifunctional protein PyrR (179 aa).

Residues 99-111 (VILIDDVLYTGRT) carry the PRPP-binding motif.

This sequence belongs to the purine/pyrimidine phosphoribosyltransferase family. PyrR subfamily. As to quaternary structure, homodimer and homohexamer; in equilibrium.

The catalysed reaction is UMP + diphosphate = 5-phospho-alpha-D-ribose 1-diphosphate + uracil. Functionally, regulates transcriptional attenuation of the pyrimidine nucleotide (pyr) operon by binding in a uridine-dependent manner to specific sites on pyr mRNA. This disrupts an antiterminator hairpin in the RNA and favors formation of a downstream transcription terminator, leading to a reduced expression of downstream genes. Also displays a weak uracil phosphoribosyltransferase activity which is not physiologically significant. In Latilactobacillus sakei subsp. sakei (strain 23K) (Lactobacillus sakei subsp. sakei), this protein is Bifunctional protein PyrR.